A 757-amino-acid chain; its full sequence is 5-methyltetrahydropteroyltriglutamate--homocysteine methyltransferase (757 aa).

Residues 15–18 (RELK) and Lys114 each bind 5-methyltetrahydropteroyltri-L-glutamate. Residues 428–430 (IGS) and Glu481 each bind L-homocysteine. L-methionine-binding positions include 428-430 (IGS) and Glu481. 5-methyltetrahydropteroyltri-L-glutamate is bound by residues 512–513 (RC) and Trp558. Asp596 contributes to the L-homocysteine binding site. Asp596 is a binding site for L-methionine. Glu602 is a 5-methyltetrahydropteroyltri-L-glutamate binding site. The Zn(2+) site is built by His639, Cys641, and Glu663. The Proton donor role is filled by His692. Residue Cys724 coordinates Zn(2+).

It belongs to the vitamin-B12 independent methionine synthase family. Zn(2+) serves as cofactor.

The catalysed reaction is 5-methyltetrahydropteroyltri-L-glutamate + L-homocysteine = tetrahydropteroyltri-L-glutamate + L-methionine. The protein operates within amino-acid biosynthesis; L-methionine biosynthesis via de novo pathway; L-methionine from L-homocysteine (MetE route): step 1/1. Catalyzes the transfer of a methyl group from 5-methyltetrahydrofolate to homocysteine resulting in methionine formation. This Lactococcus lactis subsp. cremoris (strain SK11) protein is 5-methyltetrahydropteroyltriglutamate--homocysteine methyltransferase.